Reading from the N-terminus, the 258-residue chain is Regulatory protein RecX (258 aa).

This sequence belongs to the RecX family.

Its subcellular location is the cytoplasm. Functionally, modulates RecA activity. The sequence is that of Regulatory protein RecX from Streptococcus pneumoniae (strain P1031).